Here is a 272-residue protein sequence, read N- to C-terminus: 1,4-dihydroxy-2-naphthoyl-CoA synthase (272 aa).

Residues Arg-33, 72 to 76, Tyr-84, 116 to 120, Thr-142, Ser-148, Tyr-245, and Lys-260 contribute to the substrate site; these read SGGDQ and YAIGG. 141–143 is a binding site for hydrogencarbonate; that stretch reads QTG.

Belongs to the enoyl-CoA hydratase/isomerase family. MenB subfamily. The cofactor is hydrogencarbonate.

It catalyses the reaction 2-succinylbenzoyl-CoA + H(+) = 1,4-dihydroxy-2-naphthoyl-CoA + H2O. The protein operates within quinol/quinone metabolism; 1,4-dihydroxy-2-naphthoate biosynthesis; 1,4-dihydroxy-2-naphthoate from chorismate: step 6/7. It participates in quinol/quinone metabolism; menaquinone biosynthesis. Functionally, converts o-succinylbenzoyl-CoA (OSB-CoA) to 1,4-dihydroxy-2-naphthoyl-CoA (DHNA-CoA). The polypeptide is 1,4-dihydroxy-2-naphthoyl-CoA synthase (Staphylococcus epidermidis (strain ATCC 35984 / DSM 28319 / BCRC 17069 / CCUG 31568 / BM 3577 / RP62A)).